We begin with the raw amino-acid sequence, 131 residues long: MSAKAEKKPASKAPAEKKPAAKKTSTSTDGKKRSKARKETYSSYIYKVLKQTHPDTGISQKSMSILNSFVNDIFERIATEASKLAAYNKKSTISAREIQTAVRLILPGELAKHAVSEGTRAVTKYSSSTQA.

Positions 1–19 (MSAKAEKKPASKAPAEKKP) are enriched in basic and acidic residues. The disordered stretch occupies residues 1–38 (MSAKAEKKPASKAPAEKKPAAKKTSTSTDGKKRSKARK). N6-acetyllysine; alternate is present on residues K7 and K8. Glycyl lysine isopeptide (Lys-Gly) (interchain with G-Cter in SUMO); alternate cross-links involve residues K7 and K8. The residue at position 11 (S11) is a Phosphoserine. K12 bears the N6-acetyllysine mark. N6-acetyllysine; alternate occurs at positions 17, 18, 22, and 23. Glycyl lysine isopeptide (Lys-Gly) (interchain with G-Cter in SUMO); alternate cross-links involve residues K17 and K18. N6-butyryllysine; alternate is present on K22. N6-methyllysine; alternate is present on K23. At K35 the chain carries N6-succinyllysine. Position 38 is an N6,N6-dimethyllysine (K38). An N6-succinyllysine modification is found at K47. Residue K124 forms a Glycyl lysine isopeptide (Lys-Gly) (interchain with G-Cter in ubiquitin) linkage.

It belongs to the histone H2B family. The nucleosome is a histone octamer containing two molecules each of H2A, H2B, H3 and H4 assembled in one H3-H4 heterotetramer and two H2A-H2B heterodimers. The octamer wraps approximately 147 bp of DNA. Post-translationally, monoubiquitinated by the RAD6/UBC2-BRE1 complex to form H2BK123ub1. H2BK123ub1 gives a specific tag for epigenetic transcriptional activation and is also prerequisite for H3K4me and H3K79me formation. H2BK123ub1 also modulates the formation of double-strand breaks during meiosis and is a prerequisite for DNA-damage checkpoint activation. Deubiquitination is performed by UBP8 in presence of SGF11. In terms of processing, phosphorylated by STE20 to form H2BS10ph during progression through meiotic prophase. May be correlated with chromosome condensation. H2BS10ph is also formed after H(2)O(2) treatment, and is a step leading to apoptosis. Acetylated by GCN5, a component of the SAGA complex, to form H2BK11ac and H2BK16ac. H2BK16ac can also be formed by ESA1, a component of the NuA4 histone acetyltransferase (HAT) complex. Acetylation of N-terminal lysines and particularly formation of H2BK11acK16ac has a positive effect on transcription. Post-translationally, sumoylation to form H2BK6su or H2BK7su, and probably also H2BK16su or H2BK17su, occurs preferentially near the telomeres and represses gene transcription.

The protein localises to the nucleus. The protein resides in the chromosome. Functionally, core component of nucleosome. Nucleosomes wrap and compact DNA into chromatin, limiting DNA accessibility to the cellular machineries which require DNA as a template. Histones thereby play a central role in transcription regulation, DNA repair, DNA replication and chromosomal stability. DNA accessibility is regulated via a complex set of post-translational modifications of histones, also called histone code, and nucleosome remodeling. The sequence is that of Histone H2B.1 (HTB1) from Saccharomyces cerevisiae (strain ATCC 204508 / S288c) (Baker's yeast).